Reading from the N-terminus, the 477-residue chain is MKQGLQLRLSQQLAMTPQLQQAIRLLQLSTLELQQELQQALENNPLLEQTDLHDEIDTQQPQDNDPLDTADALEQKEMPEELPLDASWDEIYTAGTPSGPSGDYIDDELPVYQGETTQSLQDYLMWQVELTPFSDTDRAIATSIVDAVDDTGYLTVSLDEIRESMGDVEVDLDEVEAVLKRIQRFDPVGVAAKDLRDCLLIQLSQFDKSTPWLEEARLIICDHLDLLANHDFRTLMRVTRLKEEVLKEAVNLIQSLDPRPGQSIQTGEPEYVIPDVLVRKHNGRWTVELNSDSIPRLQINQHYAAMCNSARNDADSQFIRSNLQDAKWLIKSLESRNDTLLRVSRCIVEQQQAFFEQGEEYMKPMVLADIAQAVEMHESTISRVTTQKYLHSPRGIFELKYFFSSHVNTEGGGEASSTAIRALVKKLIAAENPAKPLSDSKLTSLLSEQGIMVARRTVAKYRESLSIPPSNQRKQLV.

The H-T-H motif DNA-binding region spans 366–385; sequence VLADIAQAVEMHESTISRVT. The RPON box motif lies at 454–462; the sequence is ARRTVAKYR.

Belongs to the sigma-54 factor family.

Functionally, sigma factors are initiation factors that promote the attachment of RNA polymerase to specific initiation sites and are then released. This sigma factor is responsible for the expression of enzymes involved in arginine catabolism. The open complex (sigma-54 and core RNA polymerase) serves as the receptor for the receipt of the melting signal from the remotely bound activator protein GlnG(NtrC). The polypeptide is RNA polymerase sigma-54 factor (rpoN) (Salmonella typhimurium (strain LT2 / SGSC1412 / ATCC 700720)).